A 222-amino-acid chain; its full sequence is Deoxyribose-phosphate aldolase (222 aa).

The active-site Proton donor/acceptor is aspartate 92. Residue lysine 156 is the Schiff-base intermediate with acetaldehyde of the active site. The Proton donor/acceptor role is filled by lysine 185.

This sequence belongs to the DeoC/FbaB aldolase family. DeoC type 1 subfamily. As to quaternary structure, homodimer.

The protein localises to the cytoplasm. The catalysed reaction is 2-deoxy-D-ribose 5-phosphate = D-glyceraldehyde 3-phosphate + acetaldehyde. It participates in carbohydrate degradation; 2-deoxy-D-ribose 1-phosphate degradation; D-glyceraldehyde 3-phosphate and acetaldehyde from 2-deoxy-alpha-D-ribose 1-phosphate: step 2/2. Its activity is regulated as follows. Shows high stability to high concentrations of acetaldehyde. In terms of biological role, catalyzes a reversible aldol reaction between acetaldehyde and D-glyceraldehyde 3-phosphate to generate 2-deoxy-D-ribose 5-phosphate. The chain is Deoxyribose-phosphate aldolase from Aciduliprofundum boonei (strain DSM 19572 / T469).